The chain runs to 100 residues: Large ribosomal subunit protein bL21 (100 aa).

Belongs to the bacterial ribosomal protein bL21 family. Part of the 50S ribosomal subunit. Contacts protein L20.

This protein binds to 23S rRNA in the presence of protein L20. The chain is Large ribosomal subunit protein bL21 from Corynebacterium jeikeium (strain K411).